The chain runs to 620 residues: Sterile alpha motif domain-containing protein 15 (620 aa).

The interval 1-394 (MSEVSGDYNS…PNYPAGKDKL (394 aa)) is disordered. 3 stretches are compositionally biased toward basic and acidic residues: residues 62–83 (TRTR…DLQR), 106–125 (IDPE…KSVE), and 135–180 (TKSE…HFKS). Residues 181–191 (TEQSGTEQPEQ) show a composition bias toward polar residues. Residues 233 to 242 (RPLKASKKAQ) show a composition bias toward basic residues. A compositionally biased stretch (acidic residues) spans 261–270 (LLDDQEETQE). 4 stretches are compositionally biased toward basic and acidic residues: residues 271–286 (ESIK…DRKP), 295–315 (KSSE…DKDP), 323–337 (FPKE…KTGD), and 347–382 (IQEK…KPES). An SAM domain is found at 480-543 (WSPERVAEWI…SYHTRVLLGI (64 aa)). Residues 594–604 (EIKAEEKKEDA) show a composition bias toward basic and acidic residues. Positions 594-620 (EIKAEEKKEDALPENSLEENEELYEAT) are disordered. A compositionally biased stretch (acidic residues) spans 609 to 620 (SLEENEELYEAT).

This Mus musculus (Mouse) protein is Sterile alpha motif domain-containing protein 15 (Samd15).